A 457-amino-acid polypeptide reads, in one-letter code: Arginine biosynthesis bifunctional protein ArgJ, mitochondrial (457 aa).

6 residues coordinate substrate: Thr-184, Lys-213, Thr-224, Glu-312, Asn-452, and Thr-457. The Nucleophile role is filled by Thr-224.

This sequence belongs to the ArgJ family. As to quaternary structure, heterodimer of an alpha and a beta chain. Post-translationally, the alpha and beta chains are autoproteolytically processed from a single precursor protein within the mitochondrion.

The protein resides in the mitochondrion matrix. The enzyme catalyses N(2)-acetyl-L-ornithine + L-glutamate = N-acetyl-L-glutamate + L-ornithine. It catalyses the reaction L-glutamate + acetyl-CoA = N-acetyl-L-glutamate + CoA + H(+). It participates in amino-acid biosynthesis; L-arginine biosynthesis; L-ornithine and N-acetyl-L-glutamate from L-glutamate and N(2)-acetyl-L-ornithine (cyclic): step 1/1. It functions in the pathway amino-acid biosynthesis; L-arginine biosynthesis; N(2)-acetyl-L-ornithine from L-glutamate: step 1/4. Catalyzes two activities which are involved in the cyclic version of arginine biosynthesis: the synthesis of acetylglutamate from glutamate and acetyl-CoA, and of ornithine by transacetylation between acetylornithine and glutamate. This is Arginine biosynthesis bifunctional protein ArgJ, mitochondrial from Aspergillus terreus (strain NIH 2624 / FGSC A1156).